We begin with the raw amino-acid sequence, 459 residues long: Ribulose bisphosphate carboxylase/oxygenase activase, chloroplastic (459 aa).

Residue 164–171 (GGKGQGKS) participates in ATP binding.

It belongs to the RuBisCO activase family.

The protein resides in the plastid. The protein localises to the chloroplast stroma. In terms of biological role, activation of RuBisCO (ribulose-1,5-bisphosphate carboxylase/oxygenase; EC 4.1.1.39) involves the ATP-dependent carboxylation of the epsilon-amino group of lysine leading to a carbamate structure. The chain is Ribulose bisphosphate carboxylase/oxygenase activase, chloroplastic from Solanum pennellii (Tomato).